Consider the following 276-residue polypeptide: Large ribosomal subunit protein uL2 (276 aa).

Disordered stretches follow at residues 1–20 (MGIKKYNPTTNGRRNMTTND) and 219–276 (TVRG…RRKK). The segment covering 7-20 (NPTTNGRRNMTTND) has biased composition (polar residues).

The protein belongs to the universal ribosomal protein uL2 family. As to quaternary structure, part of the 50S ribosomal subunit. Forms a bridge to the 30S subunit in the 70S ribosome.

Its function is as follows. One of the primary rRNA binding proteins. Required for association of the 30S and 50S subunits to form the 70S ribosome, for tRNA binding and peptide bond formation. It has been suggested to have peptidyltransferase activity; this is somewhat controversial. Makes several contacts with the 16S rRNA in the 70S ribosome. This is Large ribosomal subunit protein uL2 from Bacillus cereus (strain G9842).